Reading from the N-terminus, the 325-residue chain is Biotin synthase (325 aa).

The Radical SAM core domain maps to 52–281; that stretch reads YQKDDVVLCS…AKPLLICGGR (230 aa). The [4Fe-4S] cluster site is built by C70, C74, and C77. The [2Fe-2S] cluster site is built by S114, C146, and C206.

The protein belongs to the radical SAM superfamily. Biotin synthase family. Homodimer. The cofactor is [4Fe-4S] cluster. [2Fe-2S] cluster serves as cofactor.

The catalysed reaction is (4R,5S)-dethiobiotin + (sulfur carrier)-SH + 2 reduced [2Fe-2S]-[ferredoxin] + 2 S-adenosyl-L-methionine = (sulfur carrier)-H + biotin + 2 5'-deoxyadenosine + 2 L-methionine + 2 oxidized [2Fe-2S]-[ferredoxin]. The protein operates within cofactor biosynthesis; biotin biosynthesis; biotin from 7,8-diaminononanoate: step 2/2. Catalyzes the conversion of dethiobiotin (DTB) to biotin by the insertion of a sulfur atom into dethiobiotin via a radical-based mechanism. The polypeptide is Biotin synthase (Syntrophus aciditrophicus (strain SB)).